We begin with the raw amino-acid sequence, 209 residues long: Protein ASG7 (209 aa).

Residues 1–49 (MTTLASSIEHKTKHLAAPFENDENTWMKKYCCQCKSCKMSVPVQPWLPR) lie on the Lumenal side of the membrane. The chain crosses the membrane as a helical span at residues 50–70 (FFVFGILCPVFWLVNLLAWWF). The Cytoplasmic portion of the chain corresponds to 71–184 (LQYWQPHELE…LLRKTFRNWN (114 aa)). Phosphoserine is present on residues S121, S123, and S125. T153 bears the Phosphothreonine mark. Residues 185 to 205 (LRSLLGLLIDSILIIFVVLLC) traverse the membrane as a helical segment. At 206–209 (KKSR) the chain is on the lumenal side.

It localises to the endomembrane system. In terms of biological role, required for receptor inhibition of inappropriately expressed a-factor receptor (STE3) in MAT a cells. Inhibits signaling by relocalizing the G protein beta-gamma (STE4-STE18) subunit to intracellular membranes. May also be a mechanism for the down-regulation of the mating pheromone response after the zygotic fusion event, promoting the transition of the new diploid cell to vegetative growth. The protein is Protein ASG7 (ASG7) of Saccharomyces cerevisiae (strain YJM789) (Baker's yeast).